The sequence spans 451 residues: Deoxyguanosinetriphosphate triphosphohydrolase-like protein (451 aa).

Residues 61–274 (RLTHSLEVAQ…MELADDIAYG (214 aa)) enclose the HD domain.

It belongs to the dGTPase family. Type 2 subfamily.

This chain is Deoxyguanosinetriphosphate triphosphohydrolase-like protein, found in Actinobacillus succinogenes (strain ATCC 55618 / DSM 22257 / CCUG 43843 / 130Z).